The chain runs to 495 residues: MSDLNKLGLAEARDLLRKGDTTSVELTEACLKAIDGADALNAFVHKTPDVALDRAKAADARIAEGDAPAMCGLPIGMKDLFCTKGVDSQAASNILKGFKPEYESTVSQKLQDAGAVMLGKLNMDEFAMGSSNETSAYGNAISPWRREGDETPLTPGGSSGGSAAAVAADLCLAATGTDTGGSIRQPAAFTGTVGIKPTYGRCSRWGIVAFASSLDQAGPMTKNVRDAAIMLEAMCGHDAKDSTSVDLAVPNFEAMLTGDIKGKKIGIPREYRMDGMPAEIAKLWDEGAAMLKAAGAEIVDISLPHTKYALPAYYVIAPAEASSNLARYDGVRYGHRATLAQGDGITEMYEKTRAEGFGHEVQRRVMVGTYVLSAGFYDAYYNRARKVRTLIKKDFEDVFAAGVDAILTPATPSAAFGLGEMNDEDPVKMYLNDVFTVTVNLAGLPGISVPTGVDTQGLPLGLQLIGRPWDEGDLLNTAYALEQAAGFVAKPAQWW.

Catalysis depends on charge relay system residues Lys-78 and Ser-158. The active-site Acyl-ester intermediate is the Ser-182.

Belongs to the amidase family. GatA subfamily. As to quaternary structure, heterotrimer of A, B and C subunits.

It catalyses the reaction L-glutamyl-tRNA(Gln) + L-glutamine + ATP + H2O = L-glutaminyl-tRNA(Gln) + L-glutamate + ADP + phosphate + H(+). In terms of biological role, allows the formation of correctly charged Gln-tRNA(Gln) through the transamidation of misacylated Glu-tRNA(Gln) in organisms which lack glutaminyl-tRNA synthetase. The reaction takes place in the presence of glutamine and ATP through an activated gamma-phospho-Glu-tRNA(Gln). The sequence is that of Glutamyl-tRNA(Gln) amidotransferase subunit A from Ruegeria sp. (strain TM1040) (Silicibacter sp.).